A 258-amino-acid polypeptide reads, in one-letter code: Snake venom serine protease PTLE1 (258 aa).

A signal peptide spans 1–18 (MVLIRVLANLLILQLSYA). Residues 19 to 24 (QKSSEL) constitute a propeptide that is removed on maturation. The Peptidase S1 domain maps to 25-249 (VIGGDECNIN…YTDWIENIIA (225 aa)). 6 disulfides stabilise this stretch: Cys31-Cys163, Cys50-Cys66, Cys98-Cys256, Cys142-Cys210, Cys174-Cys189, and Cys200-Cys225. A glycan (N-linked (GlcNAc...) asparagine) is linked at Asn44. Catalysis depends on His65, which acts as the Charge relay system. N-linked (GlcNAc...) asparagine glycosylation is found at Asn79 and Asn103. Asp110 acts as the Charge relay system in catalysis. Asn121 is a glycosylation site (N-linked (GlcNAc...) asparagine). Ser204 serves as the catalytic Charge relay system.

It belongs to the peptidase S1 family. Snake venom subfamily. In terms of assembly, monomer. In terms of tissue distribution, expressed by the venom gland.

The protein resides in the secreted. Its function is as follows. Snake venom serine protease that may act in the hemostasis system of the prey. This Gloydius halys (Chinese water mocassin) protein is Snake venom serine protease PTLE1.